A 269-amino-acid chain; its full sequence is Phosphonates import ATP-binding protein PhnC (269 aa).

The region spanning 8 to 251 (IHLYGASLRH…LLDALYANEQ (244 aa)) is the ABC transporter domain. ATP is bound at residue 40-47 (GPSGAGKS).

Belongs to the ABC transporter superfamily. Phosphonates importer (TC 3.A.1.9.1) family. As to quaternary structure, the complex is composed of two ATP-binding proteins (PhnC), two transmembrane proteins (PhnE) and a solute-binding protein (PhnD).

Its subcellular location is the cell inner membrane. It carries out the reaction phosphonate(out) + ATP + H2O = phosphonate(in) + ADP + phosphate + H(+). Part of the ABC transporter complex PhnCDE involved in phosphonates import. Responsible for energy coupling to the transport system. The protein is Phosphonates import ATP-binding protein PhnC of Pseudomonas putida (strain ATCC 47054 / DSM 6125 / CFBP 8728 / NCIMB 11950 / KT2440).